The sequence spans 143 residues: Flagellar assembly factor FliW (143 aa).

Belongs to the FliW family. Interacts with translational regulator CsrA and flagellin(s).

It is found in the cytoplasm. In terms of biological role, acts as an anti-CsrA protein, binds CsrA and prevents it from repressing translation of its target genes, one of which is flagellin. Binds to flagellin and participates in the assembly of the flagellum. The polypeptide is Flagellar assembly factor FliW (Bacillus velezensis (strain DSM 23117 / BGSC 10A6 / LMG 26770 / FZB42) (Bacillus amyloliquefaciens subsp. plantarum)).